The following is a 284-amino-acid chain: Two-pore potassium channel 4 (284 aa).

Residues 1–21 (MEEENLLNENLLHPNESSPEE) form a disordered region. Residues 1 to 31 (MEEENLLNENLLHPNESSPEETQVTTVSKSK) lie on the Cytoplasmic side of the membrane. The helical transmembrane segment at 32 to 52 (WTILVLAMILLLVYLTFGVCT) threads the bilayer. The segment at residues 70-89 (DAFYFSIVTFSTVGYGDIVP) is an intramembrane region (pore-forming). The helical transmembrane segment at 93 to 113 (TTKILTIVLVSTGVVFLDYLL) threads the bilayer. Residues 114–156 (NRVVSHVLSLQENAILDRINKTRNRAIRDHIAEDGKIRLKWKL) are Cytoplasmic-facing. A helical transmembrane segment spans residues 157–177 (CLAFCAVGLCVGSGALFLHVF). The segment at residues 184–203 (DSVYLSVISVTTVGYGDKTF) is an intramembrane region (pore-forming). A helical membrane pass occupies residues 211-231 (FAVFWLLLSTIAMATLFLYLA). Residues 232–284 (EMRIDRTTVMKLPPSESEFIVFKLRESGRISEDDIKQIVREFENLEEVPSSGS) are Cytoplasmic-facing.

The protein belongs to the two pore domain potassium channel (TC 1.A.1.7) family. In terms of assembly, homodimer. Predominantly expressed in pollen.

The protein resides in the cell membrane. Voltage-independent, instantaneously activating, potassium-selective plasma membrane ion channel. Open rectifier. Regulated by cytoplasmic pH and extra-cellular calcium. Has some permeability for Rb(+) and NH(4)(+), but none for Na(+) or Li(+). The protein is Two-pore potassium channel 4 (TPK4) of Arabidopsis thaliana (Mouse-ear cress).